Consider the following 423-residue polypeptide: MAAHQMDSITYSNNVTQQYIQPQSLQDISAVEDEIQNKIEAARQESKQLHAQINKAKHKIQDASLFQMANKVTSLTKNKINLKPNIVLKGHNNKISDFRWSRDSKRILSASQDGFMLIWDSASGLKQNAIPLDSQWVLSCAISPSSTLVASAGLNNNCTIYRVSKENRVAQNVASIFKGHTCYISDIEFTDNAHILTASGDMTCALWDIPKAKRVREYSDHLGDVLALAIPEEPNSENSSNTFASCGSDGYTYIWDSRSPSAVQSFYVNDSDINALRFFKDGMSIVAGSDNGAINMYDLRSDCSIATFSLFRGYEERTPTPTYMAANMEYNTAQSPQTLKSTSSSYLDNQGVVSLDFSASGRLMYSCYTDIGCVVWDVLKGEIVGKLEGHGGRVTGVRSSPDGLAVCTGSWDSTMKIWSPGYQ.

WD repeat units follow at residues 90 to 120 (GHNNKISDFRWSRDSKRILSASQDGFMLIWD), 132 to 162 (LDSQWVLSCAISPSSTLVASAGLNNNCTIYR), 179 to 208 (GHTCYISDIEFTDNAHILTASGDMTCALWD), 220 to 256 (DHLGDVLALAIPEEPNSENSSNTFASCGSDGYTYIWD), 268 to 298 (VNDSDINALRFFKDGMSIVAGSDNGAINMYD), 348 to 377 (DNQGVVSLDFSASGRLMYSCYTDIGCVVWD), and 389 to 419 (GHGGRVTGVRSSPDGLAVCTGSWDSTMKIWS).

Belongs to the WD repeat G protein beta family. G proteins are composed of 3 units, alpha, beta and gamma. The beta-gamma subunit complex (STE4-STE18 complex) interacts with PLP1 and PLP2. Interacts with SYG1.

In terms of biological role, implicated in the a- and alpha-factor response pathway. The beta and gamma chains of the putative yeast mating response pathway G protein play a positive role in initiation of the mating response. The beta and gamma chains are required for the GTPase activity, for replacement of GDP by GTP, and for G protein-effector interaction. In Saccharomyces cerevisiae (strain ATCC 204508 / S288c) (Baker's yeast), this protein is Guanine nucleotide-binding protein subunit beta (STE4).